The sequence spans 160 residues: E3 ubiquitin ligase complex SCF subunit sconC (160 aa).

The interaction with the F-box domain of F-box proteins stretch occupies residues Ile-101–Arg-160.

It belongs to the SKP1 family. As to quaternary structure, component of the SCF (SKP1-CUL1-F-box protein) E3 ubiquitin ligase complexes.

It functions in the pathway protein modification; protein ubiquitination. In terms of biological role, essential component of the SCF (SKP1-CUL1-F-box protein) E3 ubiquitin ligase complexes, which mediate the ubiquitination and subsequent proteasomal degradation of target proteins. Controls sulfur metabolite repression, probably by mediating the inactivation or degradation of the metR transcription factor. The chain is E3 ubiquitin ligase complex SCF subunit sconC (sconC) from Talaromyces marneffei (strain ATCC 18224 / CBS 334.59 / QM 7333) (Penicillium marneffei).